Here is a 254-residue protein sequence, read N- to C-terminus: Probable transcriptional regulatory protein HDEF_0869 (254 aa).

The segment at 1–20 (MAGHSKWANTKHRKAAQDAK) is disordered.

It belongs to the TACO1 family.

The protein localises to the cytoplasm. In Hamiltonella defensa subsp. Acyrthosiphon pisum (strain 5AT), this protein is Probable transcriptional regulatory protein HDEF_0869.